We begin with the raw amino-acid sequence, 641 residues long: DNA primase (641 aa).

A CHC2-type zinc finger spans residues 41–65 (CPFHDEKSPSFQVSPSKGFFHCFGC). A Toprim domain is found at 262 to 346 (SRAVVVEGYT…AAETYIAIAP (85 aa)). 3 residues coordinate Mg(2+): glutamate 268, aspartate 317, and aspartate 319. Residues 444–478 (RDRGGKGPAPDQRQRGGGPQQQAGPMTATPRGPAL) are disordered.

It belongs to the DnaG primase family. Monomer. Interacts with DnaB. The cofactor is Zn(2+). Mg(2+) serves as cofactor.

The enzyme catalyses ssDNA + n NTP = ssDNA/pppN(pN)n-1 hybrid + (n-1) diphosphate.. Its function is as follows. RNA polymerase that catalyzes the synthesis of short RNA molecules used as primers for DNA polymerase during DNA replication. The polypeptide is DNA primase (Streptomyces coelicolor (strain ATCC BAA-471 / A3(2) / M145)).